The sequence spans 650 residues: 1-deoxy-D-xylulose-5-phosphate synthase (650 aa).

Thiamine diphosphate contacts are provided by residues His-73 and 113–115 (SHA). A Mg(2+)-binding site is contributed by Asp-145. Residues 146–147 (GA), Asn-175, Tyr-287, and Glu-369 contribute to the thiamine diphosphate site. Asn-175 is a Mg(2+) binding site.

Belongs to the transketolase family. DXPS subfamily. As to quaternary structure, homodimer. Mg(2+) is required as a cofactor. Requires thiamine diphosphate as cofactor.

The enzyme catalyses D-glyceraldehyde 3-phosphate + pyruvate + H(+) = 1-deoxy-D-xylulose 5-phosphate + CO2. It participates in metabolic intermediate biosynthesis; 1-deoxy-D-xylulose 5-phosphate biosynthesis; 1-deoxy-D-xylulose 5-phosphate from D-glyceraldehyde 3-phosphate and pyruvate: step 1/1. In terms of biological role, catalyzes the acyloin condensation reaction between C atoms 2 and 3 of pyruvate and glyceraldehyde 3-phosphate to yield 1-deoxy-D-xylulose-5-phosphate (DXP). In Leifsonia xyli subsp. xyli (strain CTCB07), this protein is 1-deoxy-D-xylulose-5-phosphate synthase.